The sequence spans 203 residues: Large ribosomal subunit protein bL25 (203 aa).

The tract at residues 182 to 203 (EITEEPETEEKKEEGASSVSNS) is disordered.

It belongs to the bacterial ribosomal protein bL25 family. CTC subfamily. As to quaternary structure, part of the 50S ribosomal subunit; part of the 5S rRNA/L5/L18/L25 subcomplex. Contacts the 5S rRNA. Binds to the 5S rRNA independently of L5 and L18.

Functionally, this is one of the proteins that binds to the 5S RNA in the ribosome where it forms part of the central protuberance. This chain is Large ribosomal subunit protein bL25, found in Caldicellulosiruptor saccharolyticus (strain ATCC 43494 / DSM 8903 / Tp8T 6331).